The chain runs to 412 residues: Transcription factor IIIA (412 aa).

The segment at 20 to 43 (YLCQYCGISRSKNYLITKHIQSHH) adopts a C2H2-type 1; degenerate zinc-finger fold. 3 consecutive C2H2-type zinc fingers follow at residues 66–88 (HTCQ…MQSH), 94–118 (FTCY…LLTH), and 123–148 (FKCP…KKYH). The interval 144–207 (VKKYHSNDNR…NGNGDSQPAE (64 aa)) is disordered. Residues 148 to 188 (HSNDNRDKDNTGLGDGDKDNTCKGDDDKEKSGSGGCEKENE) show a composition bias toward basic and acidic residues. Lys185 is covalently cross-linked (Glycyl lysine isopeptide (Lys-Gly) (interchain with G-Cter in ubiquitin)). The C2H2-type 5 zinc-finger motif lies at 215 to 239 (VVCKEIGCGKAFKYPSQLQKHQDSH). Residues 247–272 (AFCSEPGCMKYFTNEECLKSHIRSCH) form a C2H2-type 6; degenerate zinc finger. The segment at 275–296 (INCEICGSKHLKKNIKRHLRTH) adopts a C2H2-type 7; degenerate zinc-finger fold. A C2H2-type 8 zinc finger spans residues 305-330 (IKCEVEGCSSTFSKASNLQKHMKAVH). Residues 336 to 362 (FVCGFPGCGMRFAYKHVRNKHENSGYH) form a C2H2-type 9; degenerate zinc finger. The short motif at 384-391 (LKRKQVTA) is the Nuclear localization signal element.

In terms of processing, protein product TFIIIA (44 kDa) is proteolytically cleaved into TFIIIA-C (34 kDa). In terms of tissue distribution, expressed in seedlings, flowers, siliques and seeds.

The protein localises to the nucleus. It is found in the nucleolus. Essential protein. Isoform 1 is a transcription activator the binds both 5S rDNA and 5S rRNA and stimulates the transcription of 5S rRNA gene. Isoform 1 regulates 5S rRNA levels during development. The protein is Transcription factor IIIA of Arabidopsis thaliana (Mouse-ear cress).